The following is a 126-amino-acid chain: Large ribosomal subunit protein bL12 (126 aa).

The protein belongs to the bacterial ribosomal protein bL12 family. In terms of assembly, homodimer. Part of the ribosomal stalk of the 50S ribosomal subunit. Forms a multimeric L10(L12)X complex, where L10 forms an elongated spine to which 2 to 4 L12 dimers bind in a sequential fashion. Binds GTP-bound translation factors.

Forms part of the ribosomal stalk which helps the ribosome interact with GTP-bound translation factors. Is thus essential for accurate translation. This Helicobacter hepaticus (strain ATCC 51449 / 3B1) protein is Large ribosomal subunit protein bL12.